The primary structure comprises 117 residues: Ribulose bisphosphate carboxylase small subunit 1 (117 aa).

The protein belongs to the RuBisCO small chain family. In terms of assembly, heterohexadecamer of 8 large and 8 small subunits.

Its function is as follows. RuBisCO catalyzes two reactions: the carboxylation of D-ribulose 1,5-bisphosphate, the primary event in carbon dioxide fixation, as well as the oxidative fragmentation of the pentose substrate. Both reactions occur simultaneously and in competition at the same active site. Although the small subunit is not catalytic it is essential for maximal activity. This chain is Ribulose bisphosphate carboxylase small subunit 1, found in Hydrogenovibrio marinus.